A 226-amino-acid polypeptide reads, in one-letter code: MGIRAIVVDTAGTTTDLNFIQDVLFPYSVKALPDFLEQNQHNVLVENCICDTKDIALEPDADLARVTEILQQWVSEDRKATPLKTLQGLIWKQGYAHGEFKGHIFPDFIEAVKRFSAQNLRIYSFSSGSVDAQKLLFSHSDGGDLTEMFNGHFDTRTGNKLDKQAYCNILNTISLSPKQVLFVSDVIEELKAAEAAGMMTCQMVRDSTQRTGEFRKISSFDELLIE.

This sequence belongs to the HAD-like hydrolase superfamily. MasA/MtnC family. Monomer. It depends on Mg(2+) as a cofactor.

The enzyme catalyses 5-methylsulfanyl-2,3-dioxopentyl phosphate + H2O = 1,2-dihydroxy-5-(methylsulfanyl)pent-1-en-3-one + phosphate. The protein operates within amino-acid biosynthesis; L-methionine biosynthesis via salvage pathway; L-methionine from S-methyl-5-thio-alpha-D-ribose 1-phosphate: step 3/6. It functions in the pathway amino-acid biosynthesis; L-methionine biosynthesis via salvage pathway; L-methionine from S-methyl-5-thio-alpha-D-ribose 1-phosphate: step 4/6. Its function is as follows. Bifunctional enzyme that catalyzes the enolization of 2,3-diketo-5-methylthiopentyl-1-phosphate (DK-MTP-1-P) into the intermediate 2-hydroxy-3-keto-5-methylthiopentenyl-1-phosphate (HK-MTPenyl-1-P), which is then dephosphorylated to form the acireductone 1,2-dihydroxy-3-keto-5-methylthiopentene (DHK-MTPene). The chain is Enolase-phosphatase E1 from Shewanella baltica (strain OS223).